A 518-amino-acid chain; its full sequence is MQNLPKWKIFLSIICTVFAVICALPNFMQVNSKFLPHDSVNLGLDLRGGAHLLLDVDFDTYLNDSMENLADTLRKNFREDKIGYKNLLVRQNSIQLEVRSPEELKPLKKIINKIDPEIIAEVNENKIKLSYSESRLNDLLNKVVDQSIEIVRMRVDSTGTKEPTLQKQGDKHILLQVPGEENPSYLKNILGKTAKLTFHLVDENANIEEAVKGHVPVGSMLVKGDSESHREYYVVIKKKVVLGGDQLTTASASFDQNSQAVVAFSFNNLGSKIFGEITKNNTGKRLAIVLDNKLLSAPTINGAIMGGSGIITGNFTVESANELALLLRAGSLPAPLKIIEERSIGPSLGADSIESGKKAGLIGFIAVCIFMVWSYGVLGLFANIALSLALLYILALLSLFQATLTLPGIAGIILTMGMAVDANVLIYERIKEELHKGVSNLYAIRTGFESAFATILDSNLTTLIVAFLLYIFGVGAIKGFAVALTIGIISSMFSAIIITKLLIDIWVKYFIPKKLGLV.

A run of 6 helical transmembrane segments spans residues isoleucine 9–glutamine 29, leucine 361–phenylalanine 381, isoleucine 384–leucine 404, leucine 406–isoleucine 426, phenylalanine 452–valine 474, and isoleucine 486–tryptophan 506.

It belongs to the SecD/SecF family. SecD subfamily. As to quaternary structure, forms a complex with SecF. Part of the essential Sec protein translocation apparatus which comprises SecA, SecYEG and auxiliary proteins SecDF-YajC and YidC.

The protein resides in the cell inner membrane. Functionally, part of the Sec protein translocase complex. Interacts with the SecYEG preprotein conducting channel. SecDF uses the proton motive force (PMF) to complete protein translocation after the ATP-dependent function of SecA. This Rickettsia felis (strain ATCC VR-1525 / URRWXCal2) (Rickettsia azadi) protein is Protein translocase subunit SecD.